We begin with the raw amino-acid sequence, 979 residues long: Translation initiation factor IF-2 (979 aa).

Residues 50–77 (LKRSHGQSDDSARKKITLTKRETSEIRQ) show a composition bias toward basic and acidic residues. The tract at residues 50 to 385 (LKRSHGQSDD…GKHNADDARS (336 aa)) is disordered. A compositionally biased stretch (polar residues) spans 78–87 (SDSTGKTRTV). Basic and acidic residues-rich tracts occupy residues 98 to 109 (IKRDDVESHGDG), 121 to 142 (EEVR…RQEA), and 149 to 173 (EAAE…RRQA). Low complexity predominate over residues 174-192 (ELLAQKAAEEAAAAQAAAD). 3 stretches are compositionally biased toward basic and acidic residues: residues 196 to 211 (ETAR…RLAT), 219 to 263 (NADD…EAEA), and 280 to 291 (PSERKAEEKKAE). Over residues 317–327 (APAATTTTAAA) the composition is skewed to low complexity. A compositionally biased stretch (gly residues) spans 351 to 368 (GGGLKTRGDSSGGVGGWR). A tr-type G domain is found at 479–646 (PRPPVVTVMG…NVLLQAEVLE (168 aa)). Residues 488 to 495 (GHVDHGKT) form a G1 region. 488–495 (GHVDHGKT) contacts GTP. The tract at residues 513–517 (GITQH) is G2. The tract at residues 534–537 (DTPG) is G3. GTP-binding positions include 534–538 (DTPGH) and 588–591 (TKVD). A G4 region spans residues 588–591 (TKVD). Positions 624 to 626 (SAK) are G5.

This sequence belongs to the TRAFAC class translation factor GTPase superfamily. Classic translation factor GTPase family. IF-2 subfamily.

The protein localises to the cytoplasm. One of the essential components for the initiation of protein synthesis. Protects formylmethionyl-tRNA from spontaneous hydrolysis and promotes its binding to the 30S ribosomal subunits. Also involved in the hydrolysis of GTP during the formation of the 70S ribosomal complex. In Cupriavidus metallidurans (strain ATCC 43123 / DSM 2839 / NBRC 102507 / CH34) (Ralstonia metallidurans), this protein is Translation initiation factor IF-2.